Here is a 231-residue protein sequence, read N- to C-terminus: Achaete-scute homolog 1 (231 aa).

Disordered stretches follow at residues 1 to 24 (MESS…FLPP) and 39 to 92 (AAAA…PELM). Residues 39-51 (AAAAAQSAQQQQP) are compositionally biased toward low complexity. Positions 76 to 85 (SAAKQVKRQR) are enriched in basic residues. Residues 113–165 (AAVARRNERERNRVKLVNLGFATLREHVPNGAANKKMSKVETLRSAVEYIRAL) form the bHLH domain. Position 151 is an N6-acetyllysine (Lys-151).

In terms of assembly, efficient DNA binding requires dimerization with another bHLH protein. Forms a heterodimer with TCF3. Developing CNS and PNS at embryonic and postnatal stages. Expressed in the epithelium of glandular stomach.

The protein localises to the nucleus. Its function is as follows. Transcription factor that plays a key role in neuronal differentiation: acts as a pioneer transcription factor, accessing closed chromatin to allow other factors to bind and activate neural pathways. Directly binds the E box motif (5'-CANNTG-3') on promoters and promotes transcription of neuronal genes. The combination of three transcription factors, ASCL1, POU3F2/BRN2 and MYT1L, is sufficient to reprogram fibroblasts and other somatic cells into induced neuronal (iN) cells in vitro. Plays a role at early stages of development of specific neural lineages in most regions of the CNS, and of several lineages in the PNS. Essential for the generation of olfactory and autonomic neurons. Acts synergistically with FOXN4 to specify the identity of V2b neurons rather than V2a from bipotential p2 progenitors during spinal cord neurogenesis, probably through DLL4-NOTCH signaling activation. Involved in the regulation of neuroendocrine cell development in the glandular stomach. This chain is Achaete-scute homolog 1, found in Mus musculus (Mouse).